The sequence spans 282 residues: NADPH-dependent 7-cyano-7-deazaguanine reductase (282 aa).

Position 88–90 (88–90 (IES)) interacts with substrate. 90 to 91 (SK) contributes to the NADPH binding site. The active-site Thioimide intermediate is Cys190. Asp197 acts as the Proton donor in catalysis. Residue 229 to 230 (HE) coordinates substrate. 258–259 (RG) provides a ligand contact to NADPH.

The protein belongs to the GTP cyclohydrolase I family. QueF type 2 subfamily. Homodimer.

The protein resides in the cytoplasm. It carries out the reaction 7-aminomethyl-7-carbaguanine + 2 NADP(+) = 7-cyano-7-deazaguanine + 2 NADPH + 3 H(+). It participates in tRNA modification; tRNA-queuosine biosynthesis. Functionally, catalyzes the NADPH-dependent reduction of 7-cyano-7-deazaguanine (preQ0) to 7-aminomethyl-7-deazaguanine (preQ1). The polypeptide is NADPH-dependent 7-cyano-7-deazaguanine reductase (Escherichia coli O139:H28 (strain E24377A / ETEC)).